A 157-amino-acid chain; its full sequence is GTP-dependent dephospho-CoA kinase (157 aa).

Asp40, Asp59, Lys61, Glu107, and Asp128 together coordinate GTP.

Belongs to the GTP-dependent DPCK family.

It carries out the reaction 3'-dephospho-CoA + GTP = GDP + CoA + H(+). It functions in the pathway cofactor biosynthesis; coenzyme A biosynthesis. Functionally, catalyzes the GTP-dependent phosphorylation of the 3'-hydroxyl group of dephosphocoenzyme A to form coenzyme A (CoA). In Desulfurococcus amylolyticus (strain DSM 18924 / JCM 16383 / VKM B-2413 / 1221n) (Desulfurococcus kamchatkensis), this protein is GTP-dependent dephospho-CoA kinase.